The sequence spans 862 residues: DNA mismatch repair protein MutS (862 aa).

604–611 (GPNMAGKS) serves as a coordination point for ATP.

It belongs to the DNA mismatch repair MutS family.

In terms of biological role, this protein is involved in the repair of mismatches in DNA. It is possible that it carries out the mismatch recognition step. This protein has a weak ATPase activity. In Brevibacillus brevis (strain 47 / JCM 6285 / NBRC 100599), this protein is DNA mismatch repair protein MutS.